Reading from the N-terminus, the 930-residue chain is Isoleucine--tRNA ligase (930 aa).

Positions P57–H67 match the 'HIGH' region motif. E554 serves as a coordination point for L-isoleucyl-5'-AMP. Positions K595 to S599 match the 'KMSKS' region motif. K598 contributes to the ATP binding site. The Zn(2+) site is built by C888, C891, C908, and C911.

The protein belongs to the class-I aminoacyl-tRNA synthetase family. IleS type 1 subfamily. In terms of assembly, monomer. The cofactor is Zn(2+).

The protein resides in the cytoplasm. The enzyme catalyses tRNA(Ile) + L-isoleucine + ATP = L-isoleucyl-tRNA(Ile) + AMP + diphosphate. In terms of biological role, catalyzes the attachment of isoleucine to tRNA(Ile). As IleRS can inadvertently accommodate and process structurally similar amino acids such as valine, to avoid such errors it has two additional distinct tRNA(Ile)-dependent editing activities. One activity is designated as 'pretransfer' editing and involves the hydrolysis of activated Val-AMP. The other activity is designated 'posttransfer' editing and involves deacylation of mischarged Val-tRNA(Ile). The polypeptide is Isoleucine--tRNA ligase (Streptococcus pneumoniae (strain P1031)).